We begin with the raw amino-acid sequence, 86 residues long: Exodeoxyribonuclease 7 small subunit (86 aa).

This sequence belongs to the XseB family. Heterooligomer composed of large and small subunits.

The protein localises to the cytoplasm. The catalysed reaction is Exonucleolytic cleavage in either 5'- to 3'- or 3'- to 5'-direction to yield nucleoside 5'-phosphates.. Bidirectionally degrades single-stranded DNA into large acid-insoluble oligonucleotides, which are then degraded further into small acid-soluble oligonucleotides. This chain is Exodeoxyribonuclease 7 small subunit, found in Bacillus licheniformis (strain ATCC 14580 / DSM 13 / JCM 2505 / CCUG 7422 / NBRC 12200 / NCIMB 9375 / NCTC 10341 / NRRL NRS-1264 / Gibson 46).